Here is a 155-residue protein sequence, read N- to C-terminus: Transcriptional repressor NrdR (155 aa).

The tract at residues Met-1–Ala-24 is disordered. The segment at Cys-3–Cys-34 is a zinc-finger region. Basic and acidic residues predominate over residues Gly-7 to Ala-24. An ATP-cone domain is found at Val-49 to Asp-139.

This sequence belongs to the NrdR family. Zn(2+) serves as cofactor.

In terms of biological role, negatively regulates transcription of bacterial ribonucleotide reductase nrd genes and operons by binding to NrdR-boxes. The protein is Transcriptional repressor NrdR of Sphingopyxis alaskensis (strain DSM 13593 / LMG 18877 / RB2256) (Sphingomonas alaskensis).